The following is a 96-amino-acid chain: Co-chaperonin GroES (96 aa).

The protein belongs to the GroES chaperonin family. In terms of assembly, heptamer of 7 subunits arranged in a ring. Interacts with the chaperonin GroEL.

It is found in the cytoplasm. Its function is as follows. Together with the chaperonin GroEL, plays an essential role in assisting protein folding. The GroEL-GroES system forms a nano-cage that allows encapsulation of the non-native substrate proteins and provides a physical environment optimized to promote and accelerate protein folding. GroES binds to the apical surface of the GroEL ring, thereby capping the opening of the GroEL channel. This Legionella pneumophila (strain Paris) protein is Co-chaperonin GroES.